A 100-amino-acid chain; its full sequence is Large ribosomal subunit protein uL23 (100 aa).

It belongs to the universal ribosomal protein uL23 family. Part of the 50S ribosomal subunit. Contacts protein L29, and trigger factor when it is bound to the ribosome.

Functionally, one of the early assembly proteins it binds 23S rRNA. One of the proteins that surrounds the polypeptide exit tunnel on the outside of the ribosome. Forms the main docking site for trigger factor binding to the ribosome. The sequence is that of Large ribosomal subunit protein uL23 from Escherichia coli O157:H7.